Consider the following 181-residue polypeptide: Transmembrane protein 190 (181 aa).

The first 21 residues, 1-21 (MVASGIPALSLFLLMQGSVDG), serve as a signal peptide directing secretion. The Extracellular segment spans residues 22-81 (NGIQGFFYPWSCEGDVWDRESCGGQAAIENPNLCLRLRCCYRDGVCYHQRPDETMRRKHM). A P-type domain is found at 31–71 (WSCEGDVWDRESCGGQAAIENPNLCLRLRCCYRDGVCYHQR). Intrachain disulfides connect Cys33/Cys61, Cys43/Cys60, and Cys55/Cys67. The helical transmembrane segment at 82-102 (WALGWTCGGLLFLISSICLFW) threads the bilayer. The Cytoplasmic portion of the chain corresponds to 103–181 (WAKRRDMLHL…EETEGGEDED (79 aa)). Residues 135–181 (TLSDKKTSAGSVPTSLPTEGNADVSGATEGEGTTEGGEETEGGEDED) form a disordered region. Over residues 142–152 (SAGSVPTSLPT) the composition is skewed to polar residues. A compositionally biased stretch (acidic residues) spans 170 to 181 (GGEETEGGEDED).

It localises to the membrane. The sequence is that of Transmembrane protein 190 (TMEM190) from Canis lupus familiaris (Dog).